The sequence spans 203 residues: NADH dehydrogenase [ubiquinone] 1 alpha subcomplex assembly factor 4 (203 aa).

Belongs to the NDUFAF4 family. In terms of assembly, together with NdufAF3 associates with mitochondrial complex I assembly intermediates during its biogenesis.

Its function is as follows. Involved in the assembly of mitochondrial NADH:ubiquinone oxidoreductase complex (complex I). Together with NdufAF3, involved in biogenesis of complex 1 modules N, Q and P-peripheral, but not the P-distal module. Required for recruitment of the complex I assembly factor Timmdc1 to complex 1 assembly intermediates. The sequence is that of NADH dehydrogenase [ubiquinone] 1 alpha subcomplex assembly factor 4 from Drosophila melanogaster (Fruit fly).